Reading from the N-terminus, the 694-residue chain is MEWGYLLEVTSLLAALALLQRSSGAAAASAKELACQEITVPLCKGIGYNYTYMPNQFNHDTQDEAGLEVHQFWPLVEIQCSPDLKFFLCSMYTPICLEDYKKPLPPCRSVCERAKAGCAPLMRQYGFAWPDRMRCDRLPEQGNPDTLCMDYNRTDLTTAAPSPPRRLPPPPPGEQPPSGSGHGRPPGARPPHRGGGRGGGGGDAAAPPARGGGGGGKARPPGGGAAPCEPGCQCRAPMVSVSSERHPLYNRVKTGQIANCALPCHNPFFSQDERAFTVFWIGLWSVLCFVSTFATVSTFLIDMERFKYPERPIIFLSACYLFVSVGYLVRLVAGHEKVACSGGAPGAGGAGGAGGAAAGAGAAGAGAGGPGGRGEYEELGAVEQHVRYETTGPALCTVVFLLVYFFGMASSIWWVILSLTWFLAAGMKWGNEAIAGYSQYFHLAAWLVPSVKSIAVLALSSVDGDPVAGICYVGNQSLDNLRGFVLAPLVIYLFIGTMFLLAGFVSLFRIRSVIKQQDGPTKTHKLEKLMIRLGLFTVLYTVPAAVVVACLFYEQHNRPRWEATHNCPCLRDLQPDQARRPDYAVFMLKYFMCLVVGITSGVWVWSGKTLESWRSLCTRCCWASKGAAVGGGAGATAAGGGGGPGGGGGGGPGGGGGPGGGGGSLYSDVSTGLTWRSGTASSVSYPKQMPLSQV.

An N-terminal signal peptide occupies residues 1 to 27 (MEWGYLLEVTSLLAALALLQRSSGAAA). Topologically, residues 28–275 (ASAKELACQE…NPFFSQDERA (248 aa)) are extracellular. The FZ domain occupies 30-151 (AKELACQEIT…GNPDTLCMDY (122 aa)). Intrachain disulfides connect Cys35-Cys96, Cys43-Cys89, Cys80-Cys118, Cys107-Cys148, and Cys111-Cys135. N-linked (GlcNAc...) asparagine glycosylation occurs at Asn49. 71–78 (QFWPLVEI) lines the hexadecanoate pocket. The tract at residues 95 to 100 (ICLEDY) is wnt-binding. A wnt-binding region spans residues 147 to 152 (LCMDYN). Asn152 is a glycosylation site (N-linked (GlcNAc...) asparagine). Residues 155-226 (DLTTAAPSPP…KARPPGGGAA (72 aa)) are disordered. Residues 161-175 (PSPPRRLPPPPPGEQ) are compositionally biased toward pro residues. Over residues 176 to 186 (PPSGSGHGRPP) the composition is skewed to low complexity. Over residues 210 to 225 (RGGGGGGKARPPGGGA) the composition is skewed to gly residues. A helical membrane pass occupies residues 276 to 296 (FTVFWIGLWSVLCFVSTFATV). The Cytoplasmic portion of the chain corresponds to 297–312 (STFLIDMERFKYPERP). The helical transmembrane segment at 313–333 (IIFLSACYLFVSVGYLVRLVA) threads the bilayer. At 334 to 396 (GHEKVACSGG…RYETTGPALC (63 aa)) the chain is on the extracellular side. Residues 397 to 417 (TVVFLLVYFFGMASSIWWVIL) traverse the membrane as a helical segment. Over 418–439 (SLTWFLAAGMKWGNEAIAGYSQ) the chain is Cytoplasmic. A helical membrane pass occupies residues 440–460 (YFHLAAWLVPSVKSIAVLALS). Residues 461 to 483 (SVDGDPVAGICYVGNQSLDNLRG) lie on the Extracellular side of the membrane. N-linked (GlcNAc...) asparagine glycosylation is present at Asn475. Residues 484-504 (FVLAPLVIYLFIGTMFLLAGF) form a helical membrane-spanning segment. Residues 505-532 (VSLFRIRSVIKQQDGPTKTHKLEKLMIR) are Cytoplasmic-facing. A helical membrane pass occupies residues 533 to 553 (LGLFTVLYTVPAAVVVACLFY). The Extracellular portion of the chain corresponds to 554 to 584 (EQHNRPRWEATHNCPCLRDLQPDQARRPDYA). A helical transmembrane segment spans residues 585-605 (VFMLKYFMCLVVGITSGVWVW). Residues 606–694 (SGKTLESWRS…YPKQMPLSQV (89 aa)) lie on the Cytoplasmic side of the membrane. Residues 608–613 (KTLESW) carry the Lys-Thr-X-X-X-Trp motif, mediates interaction with the PDZ domain of Dvl family members motif. Residues 648 to 664 (GGGGPGGGGGPGGGGGS) are compositionally biased toward gly residues. Residues 648–668 (GGGGPGGGGGPGGGGGSLYSD) are disordered. The PDZ-binding motif lies at 692–694 (SQV).

Belongs to the G-protein coupled receptor Fz/Smo family. Component of a Wnt-signaling complex that contains a WNT protein, a FZD protein and LRP5 or LRP6. Interacts directly with LRP5 or LRP6; the interaction is promoted by Wnt-binding and signaling and inhibited by DKK1. Interacts with GPOC, RSPO1 and RSPO3. Interacts with glypican GPC3. In terms of processing, ubiquitinated by ZNRF3, leading to its degradation by the proteasome. In terms of tissue distribution, most abundant in fetal kidney, followed by brain and lung. In adult tissues, expressed in kidney, heart, pancreas and skeletal muscle.

It is found in the membrane. Its subcellular location is the golgi apparatus. The protein localises to the cell membrane. In terms of biological role, receptor for Wnt proteins. Component of the Wnt-Fzd-LRP5-LRP6 complex that triggers beta-catenin signaling through inducing aggregation of receptor-ligand complexes into ribosome-sized signalosomes. The beta-catenin canonical signaling pathway leads to the activation of disheveled proteins, inhibition of GSK-3 kinase, nuclear accumulation of beta-catenin and activation of Wnt target genes. A second signaling pathway involving PKC and calcium fluxes has been seen for some family members, but it is not yet clear if it represents a distinct pathway or if it can be integrated in the canonical pathway, as PKC seems to be required for Wnt-mediated inactivation of GSK-3 kinase. Both pathways seem to involve interactions with G-proteins. May be involved in transduction and intercellular transmission of polarity information during tissue morphogenesis and/or in differentiated tissues. Coreceptor along with RYK of Wnt proteins, such as WNT1. This chain is Frizzled-8 (FZD8), found in Homo sapiens (Human).